Consider the following 278-residue polypeptide: Putative carbamate hydrolase RutD (278 aa).

It belongs to the AB hydrolase superfamily. Hydrolase RutD family.

It carries out the reaction carbamate + 2 H(+) = NH4(+) + CO2. In terms of biological role, involved in pyrimidine catabolism. May facilitate the hydrolysis of carbamate, a reaction that can also occur spontaneously. In Yersinia enterocolitica serotype O:8 / biotype 1B (strain NCTC 13174 / 8081), this protein is Putative carbamate hydrolase RutD.